The chain runs to 153 residues: SsrA-binding protein (153 aa).

Belongs to the SmpB family.

It localises to the cytoplasm. In terms of biological role, required for rescue of stalled ribosomes mediated by trans-translation. Binds to transfer-messenger RNA (tmRNA), required for stable association of tmRNA with ribosomes. tmRNA and SmpB together mimic tRNA shape, replacing the anticodon stem-loop with SmpB. tmRNA is encoded by the ssrA gene; the 2 termini fold to resemble tRNA(Ala) and it encodes a 'tag peptide', a short internal open reading frame. During trans-translation Ala-aminoacylated tmRNA acts like a tRNA, entering the A-site of stalled ribosomes, displacing the stalled mRNA. The ribosome then switches to translate the ORF on the tmRNA; the nascent peptide is terminated with the 'tag peptide' encoded by the tmRNA and targeted for degradation. The ribosome is freed to recommence translation, which seems to be the essential function of trans-translation. This chain is SsrA-binding protein, found in Desulforudis audaxviator (strain MP104C).